Consider the following 174-residue polypeptide: Ribosome maturation factor RimM (174 aa).

Residues 97-171 (SDGEYYWCDL…RMTVSLPEGL (75 aa)) form the PRC barrel domain.

It belongs to the RimM family. In terms of assembly, binds ribosomal protein uS19.

Its subcellular location is the cytoplasm. Functionally, an accessory protein needed during the final step in the assembly of 30S ribosomal subunit, possibly for assembly of the head region. Essential for efficient processing of 16S rRNA. May be needed both before and after RbfA during the maturation of 16S rRNA. It has affinity for free ribosomal 30S subunits but not for 70S ribosomes. This Geotalea daltonii (strain DSM 22248 / JCM 15807 / FRC-32) (Geobacter daltonii) protein is Ribosome maturation factor RimM.